The sequence spans 159 residues: MRCPKCGYNKSSVVDSRQAEEGTTIRRRRECEKCGNRFTTFERLEELPLLVIKKDGTREQFSRDKILNGIIQSAQKRPVSSEDIENCILRIERKIRSEYEDEVSSITIGNLVMDELAELDEITYVRFASVYKSFKDVDEIEELLQQITKRVRSKKSGSV.

The segment at 3 to 34 (CPKCGYNKSSVVDSRQAEEGTTIRRRRECEKC) is a zinc-finger region. An ATP-cone domain is found at 49-139 (LLVIKKDGTR…VYKSFKDVDE (91 aa)).

It belongs to the NrdR family. Requires Zn(2+) as cofactor.

Its function is as follows. Negatively regulates transcription of bacterial ribonucleotide reductase nrd genes and operons by binding to NrdR-boxes. In Streptococcus agalactiae serotype Ia (strain ATCC 27591 / A909 / CDC SS700), this protein is Transcriptional repressor NrdR.